The sequence spans 378 residues: Erythronate-4-phosphate dehydrogenase (378 aa).

The substrate site is built by Ser-45 and Thr-66. NAD(+)-binding residues include Asp-146 and Thr-175. The active site involves Arg-208. Asp-232 provides a ligand contact to NAD(+). Glu-237 is an active-site residue. The Proton donor role is filled by His-254. Gly-257 contacts NAD(+). Residue Tyr-258 coordinates substrate.

Belongs to the D-isomer specific 2-hydroxyacid dehydrogenase family. PdxB subfamily. Homodimer.

Its subcellular location is the cytoplasm. The catalysed reaction is 4-phospho-D-erythronate + NAD(+) = (R)-3-hydroxy-2-oxo-4-phosphooxybutanoate + NADH + H(+). It functions in the pathway cofactor biosynthesis; pyridoxine 5'-phosphate biosynthesis; pyridoxine 5'-phosphate from D-erythrose 4-phosphate: step 2/5. In terms of biological role, catalyzes the oxidation of erythronate-4-phosphate to 3-hydroxy-2-oxo-4-phosphonooxybutanoate. The chain is Erythronate-4-phosphate dehydrogenase from Escherichia coli O7:K1 (strain IAI39 / ExPEC).